Consider the following 300-residue polypeptide: 33 kDa chaperonin (300 aa).

2 disulfide bridges follow: C235/C237 and C269/C272.

Belongs to the HSP33 family. Post-translationally, under oxidizing conditions two disulfide bonds are formed involving the reactive cysteines. Under reducing conditions zinc is bound to the reactive cysteines and the protein is inactive.

The protein resides in the cytoplasm. Functionally, redox regulated molecular chaperone. Protects both thermally unfolding and oxidatively damaged proteins from irreversible aggregation. Plays an important role in the bacterial defense system toward oxidative stress. The polypeptide is 33 kDa chaperonin (Pseudomonas fluorescens (strain SBW25)).